A 217-amino-acid chain; its full sequence is MKIFLDTANIDEIRQGVEWGIVDGVTTNPTLISKEGADFEKRIKEICELVQGPVSAEVISLKWDEMVEEARKLASIDDFVVVKIPMTPDGIKAVKILSAEGIKTNVTLVFSANQALLAAKAGATYVSPFIGRIDDNGNDGLRLLEEIMQIYTNYGFETEVIAASVRHPMHVVEAAMIGVDIATIPFDVLKKMFLHPLTDVGIKRFLQDWEEYKKNKK.

Catalysis depends on Lys-83, which acts as the Schiff-base intermediate with substrate.

The protein belongs to the transaldolase family. Type 3B subfamily.

It is found in the cytoplasm. The enzyme catalyses D-sedoheptulose 7-phosphate + D-glyceraldehyde 3-phosphate = D-erythrose 4-phosphate + beta-D-fructose 6-phosphate. The protein operates within carbohydrate degradation; pentose phosphate pathway; D-glyceraldehyde 3-phosphate and beta-D-fructose 6-phosphate from D-ribose 5-phosphate and D-xylulose 5-phosphate (non-oxidative stage): step 2/3. Functionally, transaldolase is important for the balance of metabolites in the pentose-phosphate pathway. This Fervidobacterium nodosum (strain ATCC 35602 / DSM 5306 / Rt17-B1) protein is Probable transaldolase.